The following is a 265-amino-acid chain: Proteasome subunit alpha (265 aa).

The segment at 236–265 (EKDSKGSKGAQNPKGARDSKNSKSYGESTD) is disordered.

It belongs to the peptidase T1A family. In terms of assembly, the 20S proteasome core is composed of 14 alpha and 14 beta subunits that assemble into four stacked heptameric rings, resulting in a barrel-shaped structure. The two inner rings, each composed of seven catalytic beta subunits, are sandwiched by two outer rings, each composed of seven alpha subunits. The catalytic chamber with the active sites is on the inside of the barrel. Has a gated structure, the ends of the cylinder being occluded by the N-termini of the alpha-subunits. Is capped by the proteasome-associated ATPase, ARC.

It localises to the cytoplasm. It functions in the pathway protein degradation; proteasomal Pup-dependent pathway. Its activity is regulated as follows. The formation of the proteasomal ATPase ARC-20S proteasome complex, likely via the docking of the C-termini of ARC into the intersubunit pockets in the alpha-rings, may trigger opening of the gate for substrate entry. Interconversion between the open-gate and close-gate conformations leads to a dynamic regulation of the 20S proteasome proteolysis activity. In terms of biological role, component of the proteasome core, a large protease complex with broad specificity involved in protein degradation. This chain is Proteasome subunit alpha, found in Mycobacterium leprae (strain Br4923).